The chain runs to 56 residues: Large ribosomal subunit protein bL32 (56 aa).

Over residues 1–20 the composition is skewed to basic residues; sequence MAVPKKKKSKSKRNHRHAVW. The disordered stretch occupies residues 1-21; that stretch reads MAVPKKKKSKSKRNHRHAVWK.

Belongs to the bacterial ribosomal protein bL32 family.

This Prochlorococcus marinus (strain MIT 9312) protein is Large ribosomal subunit protein bL32.